The chain runs to 719 residues: Translation initiation factor IF-2 (719 aa).

A compositionally biased stretch (basic and acidic residues) spans 54–67; sequence NKEETKPNVDEKPP. Disordered regions lie at residues 54-75 and 97-122; these read NKEE…LTDN and STKN…KRKN. Residues 109–122 are compositionally biased toward basic residues; sequence KDKKKKNKKDKRKN. A tr-type G domain is found at 221–390; sequence HRSPVVTVMG…LLVSEMSELK (170 aa). The tract at residues 230-237 is G1; sequence GHVDHGKT. A GTP-binding site is contributed by 230-237; the sequence is GHVDHGKT. Residues 255 to 259 form a G2 region; that stretch reads GITQH. Residues 276–279 form a G3 region; that stretch reads DTPG. GTP is bound by residues 276-280 and 330-333; these read DTPGH and NKMD. The G4 stretch occupies residues 330–333; the sequence is NKMD. The G5 stretch occupies residues 366 to 368; the sequence is SAR.

This sequence belongs to the TRAFAC class translation factor GTPase superfamily. Classic translation factor GTPase family. IF-2 subfamily.

The protein localises to the cytoplasm. In terms of biological role, one of the essential components for the initiation of protein synthesis. Protects formylmethionyl-tRNA from spontaneous hydrolysis and promotes its binding to the 30S ribosomal subunits. Also involved in the hydrolysis of GTP during the formation of the 70S ribosomal complex. This chain is Translation initiation factor IF-2, found in Alkaliphilus oremlandii (strain OhILAs) (Clostridium oremlandii (strain OhILAs)).